Here is a 471-residue protein sequence, read N- to C-terminus: Cell division protein FtsP (471 aa).

The tat-type signal signal peptide spans 1–27 (MSLSRRSFLQASGVALAAGALPLKAEA). In terms of domain architecture, Plastocyanin-like spans 229 to 288 (VRLRLLNASNARRYELSMTDNRAFHVVASDLGFLPAPMTVKRLSLGPGERREVLVDMSQG).

The protein belongs to the FtsP family. Post-translationally, predicted to be exported by the Tat system. The position of the signal peptide cleavage has not been experimentally proven.

Its subcellular location is the periplasm. Its function is as follows. Cell division protein that is required for growth during stress conditions. May be involved in protecting or stabilizing the divisomal assembly under conditions of stress. The protein is Cell division protein FtsP of Rahnella sp. (strain Y9602).